The sequence spans 252 residues: MKAKVLNLKGEVTEEIELPEVFAEEFRPDIIKRAVLALQSHRRQPYGPNPLSGVDYSWENWGPGHGYARVPRWKLGRRAVVVPQAVGGRRAHPPKPERKWAEKINKKEMRKALKSAIAATANEELVRQRSHVFEGELPKVVSNELESVKRTKDVAEVFRAIGVYADVERAKERKRYRAGRGKMRGRRYVKKKSVLLVVGKDDGVVKAAKNLPGVDAVVVKDLNVELLAPGCHPGRLTVWTKSAVEYLGEWLC.

The protein belongs to the universal ribosomal protein uL4 family. Part of the 50S ribosomal subunit.

Its function is as follows. One of the primary rRNA binding proteins, this protein initially binds near the 5'-end of the 23S rRNA. It is important during the early stages of 50S assembly. It makes multiple contacts with different domains of the 23S rRNA in the assembled 50S subunit and ribosome. Forms part of the polypeptide exit tunnel. This Archaeoglobus fulgidus (strain ATCC 49558 / DSM 4304 / JCM 9628 / NBRC 100126 / VC-16) protein is Large ribosomal subunit protein uL4.